Consider the following 129-residue polypeptide: Small ribosomal subunit protein bS6 (129 aa).

Residues 100–129 (SIMLKQKEERAPRREERSEAKPEAKSEAAE) are disordered. Residues 104-129 (KQKEERAPRREERSEAKPEAKSEAAE) are compositionally biased toward basic and acidic residues.

Belongs to the bacterial ribosomal protein bS6 family.

Its function is as follows. Binds together with bS18 to 16S ribosomal RNA. The chain is Small ribosomal subunit protein bS6 from Vibrio parahaemolyticus serotype O3:K6 (strain RIMD 2210633).